The sequence spans 146 residues: Large ribosomal subunit protein uL15 (146 aa).

Over residues M1–R18 the composition is skewed to basic and acidic residues. The tract at residues M1–F50 is disordered. Positions R21 to S31 are enriched in gly residues.

The protein belongs to the universal ribosomal protein uL15 family. Part of the 50S ribosomal subunit.

Its function is as follows. Binds to the 23S rRNA. The sequence is that of Large ribosomal subunit protein uL15 from Listeria monocytogenes serotype 4b (strain CLIP80459).